The following is a 325-amino-acid chain: Homocysteine S-methyltransferase 2 (325 aa).

Positions 6–321 constitute a Hcy-binding domain; sequence LKQFLADNPK…KDIQEISAAV (316 aa). At Thr-138 the chain carries Phosphothreonine. Zn(2+) is bound by residues Cys-239, Cys-306, and Cys-307.

Zn(2+) is required as a cofactor.

The protein localises to the cytoplasm. It is found in the nucleus. It catalyses the reaction S-methyl-L-methionine + L-homocysteine = 2 L-methionine + H(+). Functionally, homocysteine S-methyltransferase involved in the conversion of S-adenosylmethionine (AdoMet) to methionine to control the methionine/AdoMet ratio. Also converts S-methylmethionine (SMM) to methionine. In Saccharomyces cerevisiae (strain ATCC 204508 / S288c) (Baker's yeast), this protein is Homocysteine S-methyltransferase 2 (SAM4).